A 190-amino-acid chain; its full sequence is Putative manganese efflux pump MntP (190 aa).

The next 6 membrane-spanning stretches (helical) occupy residues 5-25, 41-61, 64-84, 105-125, 127-147, and 169-189; these read ALLA…VATG, WHFG…GQGI, FVDA…GLKM, TSLI…GVTL, MLGL…LGLT, and ILGG…SGVF.

Belongs to the MntP (TC 9.B.29) family.

It localises to the cell inner membrane. In terms of biological role, probably functions as a manganese efflux pump. The polypeptide is Putative manganese efflux pump MntP (Oleidesulfovibrio alaskensis (strain ATCC BAA-1058 / DSM 17464 / G20) (Desulfovibrio alaskensis)).